Consider the following 146-residue polypeptide: Leptin (146 aa).

A disulfide bridge links C96 with C146.

This sequence belongs to the leptin family.

Its subcellular location is the secreted. Functionally, key player in the regulation of energy balance and body weight control. Once released into the circulation, has central and peripheral effects by binding LEPR, found in many tissues, which results in the activation of several major signaling pathways. In the hypothalamus, acts as an appetite-regulating factor that induces a decrease in food intake and an increase in energy consumption by inducing anorexinogenic factors and suppressing orexigenic neuropeptides, also regulates bone mass and secretion of hypothalamo-pituitary-adrenal hormones. In the periphery, increases basal metabolism, influences reproductive function, regulates pancreatic beta-cell function and insulin secretion, is pro-angiogenic for endothelial cell and affects innate and adaptive immunity. In the arcuate nucleus of the hypothalamus, activates by depolarization POMC neurons inducing FOS and SOCS3 expression to release anorexigenic peptides and inhibits by hyperpolarization NPY neurons inducing SOCS3 with a consequent reduction on release of orexigenic peptides. In addition to its known satiety inducing effect, has a modulatory role in nutrient absorption. In the intestine, reduces glucose absorption by enterocytes by activating PKC and leading to a sequential activation of p38, PI3K and ERK signaling pathways which exerts an inhibitory effect on glucose absorption. Acts as a growth factor on certain tissues, through the activation of different signaling pathways increases expression of genes involved in cell cycle regulation such as CCND1, via JAK2-STAT3 pathway, or VEGFA, via MAPK1/3 and PI3K-AKT1 pathways. May also play an apoptotic role via JAK2-STAT3 pathway and up-regulation of BIRC5 expression. Pro-angiogenic, has mitogenic activity on vascular endothelial cells and plays a role in matrix remodeling by regulating the expression of matrix metalloproteinases (MMPs) and tissue inhibitors of metalloproteinases (TIMPs). In innate immunity, modulates the activity and function of neutrophils by increasing chemotaxis and the secretion of oxygen radicals. Increases phagocytosis by macrophages and enhances secretion of pro-inflammatory mediators. Increases cytotoxic ability of NK cells. Plays a pro-inflammatory role, in synergy with IL1B, by inducing NOS2 which promotes the production of IL6, IL8 and Prostaglandin E2, through a signaling pathway that involves JAK2, PI3K, MAP2K1/MEK1 and MAPK14/p38. In adaptive immunity, promotes the switch of memory T-cells towards T helper-1 cell immune responses. Increases CD4(+)CD25(-) T-cell proliferation and reduces autophagy during TCR (T-cell receptor) stimulation, through MTOR signaling pathway activation and BCL2 up-regulation. The protein is Leptin (LEP) of Ovis aries (Sheep).